A 257-amino-acid polypeptide reads, in one-letter code: 1-(5-phosphoribosyl)-5-[(5-phosphoribosylamino)methylideneamino] imidazole-4-carboxamide isomerase (257 aa).

Asp-8 acts as the Proton acceptor in catalysis. Residue Asp-130 is the Proton donor of the active site.

This sequence belongs to the HisA/HisF family.

The protein resides in the cytoplasm. It carries out the reaction 1-(5-phospho-beta-D-ribosyl)-5-[(5-phospho-beta-D-ribosylamino)methylideneamino]imidazole-4-carboxamide = 5-[(5-phospho-1-deoxy-D-ribulos-1-ylimino)methylamino]-1-(5-phospho-beta-D-ribosyl)imidazole-4-carboxamide. It functions in the pathway amino-acid biosynthesis; L-histidine biosynthesis; L-histidine from 5-phospho-alpha-D-ribose 1-diphosphate: step 4/9. The polypeptide is 1-(5-phosphoribosyl)-5-[(5-phosphoribosylamino)methylideneamino] imidazole-4-carboxamide isomerase (Chlorobium chlorochromatii (strain CaD3)).